Here is a 291-residue protein sequence, read N- to C-terminus: Small ribosomal subunit biogenesis GTPase RsgA (291 aa).

The CP-type G domain occupies 63-221; the sequence is KNEIKRPPVS…IADTPGFSAL (159 aa). Residues 112–115 and 164–172 contribute to the GTP site; these read TKKD and GQSGVGKST. 4 residues coordinate Zn(2+): cysteine 245, cysteine 250, histidine 252, and cysteine 258.

This sequence belongs to the TRAFAC class YlqF/YawG GTPase family. RsgA subfamily. As to quaternary structure, monomer. Associates with 30S ribosomal subunit, binds 16S rRNA. The cofactor is Zn(2+).

It is found in the cytoplasm. One of several proteins that assist in the late maturation steps of the functional core of the 30S ribosomal subunit. Helps release RbfA from mature subunits. May play a role in the assembly of ribosomal proteins into the subunit. Circularly permuted GTPase that catalyzes slow GTP hydrolysis, GTPase activity is stimulated by the 30S ribosomal subunit. The sequence is that of Small ribosomal subunit biogenesis GTPase RsgA from Staphylococcus saprophyticus subsp. saprophyticus (strain ATCC 15305 / DSM 20229 / NCIMB 8711 / NCTC 7292 / S-41).